The sequence spans 321 residues: uncharacterized protein (321 aa).

This is an uncharacterized protein from Archaeoglobus fulgidus (strain ATCC 49558 / DSM 4304 / JCM 9628 / NBRC 100126 / VC-16).